A 385-amino-acid polypeptide reads, in one-letter code: dTDP-4-dehydro-2,3,6-trideoxy-D-glucose 4-aminotransferase (385 aa).

Lys-182 is subject to N6-(pyridoxal phosphate)lysine.

This sequence belongs to the DegT/DnrJ/EryC1 family. As to quaternary structure, homodimer. Requires pyridoxal 5'-phosphate as cofactor.

The enzyme catalyses dTDP-4-amino-2,3,4,6-tetradeoxy-alpha-D-erythro-hexopyranose + 2-oxoglutarate = dTDP-4-dehydro-2,3,6-trideoxy-alpha-D-hexopyranose + L-glutamate. Its function is as follows. Involved in the biosynthesis of forosamine ((4-dimethylamino)-2,3,4,6-tetradeoxy-alpha-D-threo-hexopyranose), a highly deoxygenated sugar component of several bioactive natural products such as the insecticidal spinosyns A and D. In the presence of pyridoxal 5'-phosphate (PLP) and alpha-ketoglutarate, catalyzes the C-4 transamination of dTDP-4-keto-2,3,6-trideoxy-alpha-D-glucose to yield dTDP-4-amino-2,3,4,6-tetradeoxy-alpha-D-glucose. It can also use pyruvate, but less efficiently than alpha-ketoglutarate. Also able to catalyze the C-4 transamination of dTDP-4-keto-2,6-dideoxy-alpha-D-glucose to yield dTDP-4-amino-2,4,6-trideoxy-D-glucose. In Saccharopolyspora spinosa, this protein is dTDP-4-dehydro-2,3,6-trideoxy-D-glucose 4-aminotransferase.